The chain runs to 180 residues: Dual-action ribosomal maturation protein DarP (180 aa).

It belongs to the DarP family.

The protein localises to the cytoplasm. In terms of biological role, member of a network of 50S ribosomal subunit biogenesis factors which assembles along the 30S-50S interface, preventing incorrect 23S rRNA structures from forming. Promotes peptidyl transferase center (PTC) maturation. This Pasteurella multocida (strain Pm70) protein is Dual-action ribosomal maturation protein DarP.